A 2969-amino-acid polypeptide reads, in one-letter code: Histone-lysine N-methyltransferase ASH1L (2969 aa).

Disordered stretches follow at residues 1–70 (MDPR…TDAQ) and 118–143 (HPRK…RDPS). Positions 21–31 (KSPSAISTGTL) are enriched in polar residues. Ser-22 bears the Phosphoserine mark. Composition is skewed to basic and acidic residues over residues 33-65 (SKRE…KDDG) and 127-143 (KMTD…RDPS). Residue Lys-34 forms a Glycyl lysine isopeptide (Lys-Gly) (interchain with G-Cter in SUMO2) linkage. An N6-acetyllysine modification is found at Lys-375. Lys-425 participates in a covalent cross-link: Glycyl lysine isopeptide (Lys-Gly) (interchain with G-Cter in SUMO2). Over residues 501–511 (IQQDSFSSSEK) the composition is skewed to polar residues. Disordered regions lie at residues 501–525 (IQQD…QPPV), 537–583 (ASDV…PNPL), 824–845 (YKPK…PPKR), 878–966 (KQGL…EMEP), 1100–1128 (SEIL…AGFV), 1151–1231 (MKKA…EHVS), and 1243–1281 (SLKE…QLRN). Positions 512–522 (GSYETSKHEKQ) are enriched in basic and acidic residues. Residues 554–579 (NLPSPSPTVSVNPLTRSPPETSSQLA) show a composition bias toward polar residues. Positions 887–897 (PKKRGRPKRQM) are enriched in basic residues. Positions 887-899 (PKKRGRPKRQMRS) form a DNA-binding region, a.T hook 1. Basic and acidic residues predominate over residues 920-932 (SKLESESDNHRSS). The span at 936–949 (FESEDQLQDPDDLD) shows a compositional bias: acidic residues. Composition is skewed to low complexity over residues 1100 to 1123 (SEIL…PVSS) and 1162 to 1175 (SPPT…SHLS). Residues Ser-1162 and Ser-1170 each carry the phosphoserine modification. Over residues 1186 to 1211 (SPISESHSDETIPSDSGIGTDNNSTS) the composition is skewed to polar residues. Gln-1220 is subject to N5-methylglutamine. Basic residues-rich tracts occupy residues 1246-1256 (EKHKHKCKRRN) and 1266-1277 (KRQKRKRKKKYP). Residues 1347–1359 (KKKRGRPPKMREA) constitute a DNA-binding region (a.T hook 2). Disordered stretches follow at residues 1489–1508 (HREH…GSSR), 1580–1711 (SESS…ASGD), and 1741–1761 (ASAP…TLGK). 4 stretches are compositionally biased toward polar residues: residues 1496 to 1508 (EQPQ…GSSR), 1580 to 1598 (SESS…SEPA), 1605 to 1622 (NLFT…PNSS), and 1650 to 1680 (LPSN…STNC). Residues 1741-1751 (ASAPPSSSPGR) are compositionally biased toward low complexity. Residues 1847 to 1859 (KRRPGRPRKCPLQ) constitute a DNA-binding region (a.T hook 3). The tract at residues 1911 to 1991 (KKGLKRKGWL…PRPPKKKYQK (81 aa)) is disordered. The tract at residues 2069-2288 (PDVPLYKKIR…KCRGIIGGKS (220 aa)) is catalytic domain. In terms of domain architecture, AWS spans 2091–2142 (YEATTCNCKKPDDDTRKGCVDDCLNRMIFAECSPNTCPCGEQCCNQRIQRHE). One can recognise an SET domain in the interval 2145–2261 (QCLERFRAEE…AGTELTYDYN (117 aa)). The 17-residue stretch at 2269 to 2285 (KQQLCKCGFEKCRGIIG) folds into the Post-SET domain. The disordered stretch occupies residues 2288–2346 (SQRVNGLTSSKNSQPMATHKKSGRSKEKRKSKHKLKKRRGHLSEEPSENINTPTRLTPQ). A compositionally biased stretch (polar residues) spans 2289 to 2303 (QRVNGLTSSKNSQPM). A compositionally biased stretch (basic residues) spans 2305 to 2327 (THKKSGRSKEKRKSKHKLKKRRG). 3 positions are modified to N6-acetyllysine: Lys-2317, Lys-2319, and Lys-2323. The segment covering 2335-2346 (ENINTPTRLTPQ) has biased composition (polar residues). Positions 2444 to 2550 (RLAQIFKEIC…KAYYNARHEA (107 aa)) constitute a Bromo domain. The segment at 2585 to 2631 (VIRCICGLYKDEGLMIQCDKCMVWQHCDCMGVNSDVEHYLCEQCDPR) adopts a PHD-type zinc-finger fold. The BAH domain maps to 2661–2798 (LLLRQGDCVY…KSAHLFYKIH (138 aa)). 2 disordered regions span residues 2825–2856 (SPHY…DLGQ) and 2876–2919 (NEIP…RRHN). Residues 2842-2855 (WKSERSKPPLKDLG) are compositionally biased toward basic and acidic residues.

The protein belongs to the class V-like SAM-binding methyltransferase superfamily. Histone-lysine methyltransferase family. SET2 subfamily. In terms of processing, methylated at Gln-1220 by N6AMT1. Widely expressed, with highest level in brain, heart and kidney.

It localises to the nucleus. It is found in the cell junction. The protein resides in the tight junction. The protein localises to the chromosome. The catalysed reaction is L-lysyl(36)-[histone H3] + 3 S-adenosyl-L-methionine = N(6),N(6),N(6)-trimethyl-L-lysyl(36)-[histone H3] + 3 S-adenosyl-L-homocysteine + 3 H(+). The enzyme catalyses L-lysyl(9)-[histone H3] + S-adenosyl-L-methionine = N(6)-methyl-L-lysyl(9)-[histone H3] + S-adenosyl-L-homocysteine + H(+). Functionally, histone methyltransferase specifically trimethylating 'Lys-36' of histone H3 forming H3K36me3. Also monomethylates 'Lys-9' of histone H3 (H3K9me1) in vitro. The physiological significance of the H3K9me1 activity is unclear. The chain is Histone-lysine N-methyltransferase ASH1L (ASH1L) from Homo sapiens (Human).